A 179-amino-acid polypeptide reads, in one-letter code: Large ribosomal subunit protein uL5 (179 aa).

This sequence belongs to the universal ribosomal protein uL5 family. In terms of assembly, part of the 50S ribosomal subunit; part of the 5S rRNA/L5/L18/L25 subcomplex. Contacts the 5S rRNA and the P site tRNA. Forms a bridge to the 30S subunit in the 70S ribosome.

Functionally, this is one of the proteins that bind and probably mediate the attachment of the 5S RNA into the large ribosomal subunit, where it forms part of the central protuberance. In the 70S ribosome it contacts protein S13 of the 30S subunit (bridge B1b), connecting the 2 subunits; this bridge is implicated in subunit movement. Contacts the P site tRNA; the 5S rRNA and some of its associated proteins might help stabilize positioning of ribosome-bound tRNAs. The protein is Large ribosomal subunit protein uL5 of Xylella fastidiosa (strain M23).